The primary structure comprises 850 residues: Protein translocase subunit SecA 2 (850 aa).

ATP contacts are provided by residues Q83, 101 to 105 (GEGKT), and D491.

The protein belongs to the SecA family. As to quaternary structure, monomer and homodimer. Part of the essential Sec protein translocation apparatus which comprises SecA, SecYEG and auxiliary proteins SecDF. Other proteins may also be involved.

It localises to the cell membrane. It is found in the cytoplasm. The catalysed reaction is ATP + H2O + cellular proteinSide 1 = ADP + phosphate + cellular proteinSide 2.. Part of the Sec protein translocase complex. Interacts with the SecYEG preprotein conducting channel. Has a central role in coupling the hydrolysis of ATP to the transfer of proteins into and across the cell membrane, serving as an ATP-driven molecular motor driving the stepwise translocation of polypeptide chains across the membrane. This is Protein translocase subunit SecA 2 from Mycolicibacterium vanbaalenii (strain DSM 7251 / JCM 13017 / BCRC 16820 / KCTC 9966 / NRRL B-24157 / PYR-1) (Mycobacterium vanbaalenii).